Reading from the N-terminus, the 156-residue chain is Aspartate carbamoyltransferase regulatory chain (156 aa).

4 residues coordinate Zn(2+): C109, C114, C140, and C143.

It belongs to the PyrI family. Contains catalytic and regulatory chains. Zn(2+) serves as cofactor.

In terms of biological role, involved in allosteric regulation of aspartate carbamoyltransferase. This is Aspartate carbamoyltransferase regulatory chain from Methanosarcina barkeri (strain Fusaro / DSM 804).